We begin with the raw amino-acid sequence, 100 residues long: Large ribosomal subunit protein bL28 (100 aa).

Belongs to the bacterial ribosomal protein bL28 family.

This is Large ribosomal subunit protein bL28 from Gluconobacter oxydans (strain 621H) (Gluconobacter suboxydans).